Consider the following 713-residue polypeptide: Polyribonucleotide nucleotidyltransferase (713 aa).

Positions 494 and 500 each coordinate Mg(2+). In terms of domain architecture, KH spans 561 to 623; that stretch reads PSFSTMTIPK…EAVQSAEKRV (63 aa). The S1 motif domain maps to 633 to 702; sequence GDVYQGTVKS…KSGKYKLSRK (70 aa).

It belongs to the polyribonucleotide nucleotidyltransferase family. Requires Mg(2+) as cofactor.

The protein resides in the cytoplasm. The catalysed reaction is RNA(n+1) + phosphate = RNA(n) + a ribonucleoside 5'-diphosphate. Its function is as follows. Involved in mRNA degradation. Catalyzes the phosphorolysis of single-stranded polyribonucleotides processively in the 3'- to 5'-direction. This chain is Polyribonucleotide nucleotidyltransferase, found in Amoebophilus asiaticus (strain 5a2).